The following is a 241-amino-acid chain: 2-C-methyl-D-erythritol 4-phosphate cytidylyltransferase (241 aa).

It belongs to the IspD/TarI cytidylyltransferase family. IspD subfamily.

It carries out the reaction 2-C-methyl-D-erythritol 4-phosphate + CTP + H(+) = 4-CDP-2-C-methyl-D-erythritol + diphosphate. The protein operates within isoprenoid biosynthesis; isopentenyl diphosphate biosynthesis via DXP pathway; isopentenyl diphosphate from 1-deoxy-D-xylulose 5-phosphate: step 2/6. In terms of biological role, catalyzes the formation of 4-diphosphocytidyl-2-C-methyl-D-erythritol from CTP and 2-C-methyl-D-erythritol 4-phosphate (MEP). This Shewanella denitrificans (strain OS217 / ATCC BAA-1090 / DSM 15013) protein is 2-C-methyl-D-erythritol 4-phosphate cytidylyltransferase.